The primary structure comprises 217 residues: Ribonuclease T (217 aa).

Residues 20 to 195 form the Exonuclease domain; it reads VVVDVETAGL…YDTERTAMLF (176 aa). Positions 23, 25, 182, and 187 each coordinate Mg(2+). The active-site Proton donor/acceptor is His-182.

It belongs to the RNase T family. As to quaternary structure, homodimer. The cofactor is Mg(2+).

Its function is as follows. Trims short 3' overhangs of a variety of RNA species, leaving a one or two nucleotide 3' overhang. Responsible for the end-turnover of tRNA: specifically removes the terminal AMP residue from uncharged tRNA (tRNA-C-C-A). Also appears to be involved in tRNA biosynthesis. The sequence is that of Ribonuclease T from Blochmanniella pennsylvanica (strain BPEN).